A 195-amino-acid chain; its full sequence is Imidazoleglycerol-phosphate dehydratase (195 aa).

It belongs to the imidazoleglycerol-phosphate dehydratase family.

Its subcellular location is the cytoplasm. It carries out the reaction D-erythro-1-(imidazol-4-yl)glycerol 3-phosphate = 3-(imidazol-4-yl)-2-oxopropyl phosphate + H2O. The protein operates within amino-acid biosynthesis; L-histidine biosynthesis; L-histidine from 5-phospho-alpha-D-ribose 1-diphosphate: step 6/9. This is Imidazoleglycerol-phosphate dehydratase from Burkholderia mallei (strain NCTC 10247).